A 404-amino-acid chain; its full sequence is Corticosteroid-binding globulin (404 aa).

A signal peptide spans 1–30 (MAWSTRTMMSLALYTCFLWLLTSGLKTVQS). 2 N-linked (GlcNAc...) asparagine glycosylation sites follow: Asn-95 and Asn-225. Gln-253 contributes to the cortisol binding site. Asn-259 is a glycosylation site (N-linked (GlcNAc...) asparagine). Residue Glu-285 coordinates cortisol. Residue Asn-326 is glycosylated (N-linked (GlcNAc...) asparagine). A cortisol-binding site is contributed by Trp-392.

This sequence belongs to the serpin family. As to expression, expressed by the liver; secreted in plasma.

Its subcellular location is the secreted. Functionally, major transport protein for glucocorticoids and progestins in the blood of almost all vertebrate species. This Mesocricetus auratus (Golden hamster) protein is Corticosteroid-binding globulin (SERPINA6).